Here is a 100-residue protein sequence, read N- to C-terminus: Large ribosomal subunit protein uL23 (100 aa).

This sequence belongs to the universal ribosomal protein uL23 family. Part of the 50S ribosomal subunit. Contacts protein L29, and trigger factor when it is bound to the ribosome.

One of the early assembly proteins it binds 23S rRNA. One of the proteins that surrounds the polypeptide exit tunnel on the outside of the ribosome. Forms the main docking site for trigger factor binding to the ribosome. In Thermotoga maritima (strain ATCC 43589 / DSM 3109 / JCM 10099 / NBRC 100826 / MSB8), this protein is Large ribosomal subunit protein uL23.